The following is an 85-amino-acid chain: U4-theraphotoxin-Hhn1a (85 aa).

The signal sequence occupies residues 1–22 (MKVTLIAILTCAAVLVLHTTAA). A propeptide spanning residues 23–48 (EELEAESQPMEVGMPDTELAAVDEER) is cleaved from the precursor. Cystine bridges form between Cys-52-Cys-66, Cys-56-Cys-77, and Cys-71-Cys-82.

The protein belongs to the neurotoxin 12 (Hwtx-2) family. 02 (Hwtx-2) subfamily. Monomer. Expressed by the venom gland.

It localises to the secreted. Neurotoxin active on both insects and mammals. The polypeptide is U4-theraphotoxin-Hhn1a (Cyriopagopus hainanus (Chinese bird spider)).